A 273-amino-acid chain; its full sequence is Hydroxyethylthiazole kinase (273 aa).

Methionine 47 provides a ligand contact to substrate. ATP contacts are provided by arginine 123 and threonine 172. A substrate-binding site is contributed by glycine 199.

It belongs to the Thz kinase family. Requires Mg(2+) as cofactor.

The enzyme catalyses 5-(2-hydroxyethyl)-4-methylthiazole + ATP = 4-methyl-5-(2-phosphooxyethyl)-thiazole + ADP + H(+). The protein operates within cofactor biosynthesis; thiamine diphosphate biosynthesis; 4-methyl-5-(2-phosphoethyl)-thiazole from 5-(2-hydroxyethyl)-4-methylthiazole: step 1/1. Catalyzes the phosphorylation of the hydroxyl group of 4-methyl-5-beta-hydroxyethylthiazole (THZ). In Ruminiclostridium cellulolyticum (strain ATCC 35319 / DSM 5812 / JCM 6584 / H10) (Clostridium cellulolyticum), this protein is Hydroxyethylthiazole kinase.